The chain runs to 547 residues: Probable terpene synthase 3 (547 aa).

The Mg(2+) site is built by aspartate 298, aspartate 302, and glutamate 451. A DDXXD motif motif is present at residues aspartate 298–aspartate 302.

It belongs to the terpene synthase family. Requires Mg(2+) as cofactor.

Functionally, probable sesquiterpene synthase. The protein is Probable terpene synthase 3 (TPS3) of Ricinus communis (Castor bean).